A 363-amino-acid polypeptide reads, in one-letter code: Adenosine deaminase (363 aa).

Position 2 is an N-acetylalanine (alanine 2). Positions 15 and 17 each coordinate Zn(2+). 2 residues coordinate substrate: histidine 17 and aspartate 19. The residue at position 54 (lysine 54) is an N6-acetyllysine. Residue glycine 184 participates in substrate binding. Position 214 (histidine 214) interacts with Zn(2+). Glutamate 217 (proton donor) is an active-site residue. Lysine 232 is modified (N6-acetyllysine). Aspartate 295 provides a ligand contact to Zn(2+). Aspartate 296 is a binding site for substrate.

This sequence belongs to the metallo-dependent hydrolases superfamily. Adenosine and AMP deaminases family. In terms of assembly, interacts with DPP4 (via extracellular domain). Interacts with PLG (via Kringle 4 domain); the interaction stimulates PLG activation when in complex with DPP4. Requires Zn(2+) as cofactor. Expressed in gastrointestinal tissues (at protein level).

The protein localises to the cell membrane. Its subcellular location is the cell junction. The protein resides in the cytoplasmic vesicle lumen. It is found in the cytoplasm. It localises to the lysosome. It carries out the reaction adenosine + H2O + H(+) = inosine + NH4(+). The enzyme catalyses 2'-deoxyadenosine + H2O + H(+) = 2'-deoxyinosine + NH4(+). It catalyses the reaction cordycepin + H2O + H(+) = 3'-deoxyinosine + NH4(+). Its function is as follows. Catalyzes the hydrolytic deamination of adenosine and 2-deoxyadenosine. Plays an important role in purine metabolism and in adenosine homeostasis. Modulates signaling by extracellular adenosine, and so contributes indirectly to cellular signaling events. Acts as a positive regulator of T-cell coactivation, by binding DPP4. Its interaction with DPP4 regulates lymphocyte-epithelial cell adhesion. Enhances dendritic cell immunogenicity by affecting dendritic cell costimulatory molecule expression and cytokines and chemokines secretion. Enhances CD4+ T-cell differentiation and proliferation. Acts as a positive modulator of adenosine receptors ADORA1 and ADORA2A, by enhancing their ligand affinity via conformational change. Stimulates plasminogen activation. Plays a role in male fertility. Plays a protective role in early postimplantation embryonic development. Also responsible for the deamination of cordycepin (3'-deoxyadenosine), a fungal natural product that shows antitumor, antibacterial, antifungal, antivirus, and immune regulation properties. This chain is Adenosine deaminase (ADA), found in Bos taurus (Bovine).